Here is a 221-residue protein sequence, read N- to C-terminus: Carbonic anhydrase (221 aa).

C38, D40, H99, and C102 together coordinate Zn(2+).

It belongs to the beta-class carbonic anhydrase family. Zn(2+) serves as cofactor.

It carries out the reaction hydrogencarbonate + H(+) = CO2 + H2O. This chain is Carbonic anhydrase (cynT), found in Helicobacter pylori (strain ATCC 700392 / 26695) (Campylobacter pylori).